We begin with the raw amino-acid sequence, 197 residues long: Putative ankyrin repeat protein R875 (197 aa).

ANK repeat units lie at residues 78-106 (LNKCLIGYCISGRLDIVKYLVILGADIRE), 107-136 (NDDCVVRTACHNGHIEVVKYLVNQGADIRA), 138-166 (DDDAIRLASKNGHLYVVKYLVSQGVNFRK), and 168-196 (NDYEINWASQNGHGSVVDFLVSKGAVLHE).

The chain is Putative ankyrin repeat protein R875 from Acanthamoeba polyphaga mimivirus (APMV).